The primary structure comprises 62 residues: UPF0291 protein CLD_1956 (62 aa).

It belongs to the UPF0291 family.

Its subcellular location is the cytoplasm. The sequence is that of UPF0291 protein CLD_1956 from Clostridium botulinum (strain Okra / Type B1).